The following is a 346-amino-acid chain: Nicotinate-nucleotide--dimethylbenzimidazole phosphoribosyltransferase (346 aa).

The Proton acceptor role is filled by Glu312.

This sequence belongs to the CobT family.

The enzyme catalyses 5,6-dimethylbenzimidazole + nicotinate beta-D-ribonucleotide = alpha-ribazole 5'-phosphate + nicotinate + H(+). The protein operates within nucleoside biosynthesis; alpha-ribazole biosynthesis; alpha-ribazole from 5,6-dimethylbenzimidazole: step 1/2. Functionally, catalyzes the synthesis of alpha-ribazole-5'-phosphate from nicotinate mononucleotide (NAMN) and 5,6-dimethylbenzimidazole (DMB). The chain is Nicotinate-nucleotide--dimethylbenzimidazole phosphoribosyltransferase from Cupriavidus taiwanensis (strain DSM 17343 / BCRC 17206 / CCUG 44338 / CIP 107171 / LMG 19424 / R1) (Ralstonia taiwanensis (strain LMG 19424)).